The chain runs to 595 residues: P2X purinoceptor 7 (595 aa).

The Cytoplasmic segment spans residues 1–22 (MPACCSCSDVFQYETNKVTRIQ). Cysteine 4 is lipidated: S-palmitoyl cysteine. A helical transmembrane segment spans residues 23–46 (SMNYGTIKWFFHVIIFSYVCFALV). Residues 47–328 (SDKLYQRKEP…ILVFGTGGKF (282 aa)) are Extracellular-facing. Cystine bridges form between cysteine 119/cysteine 168, cysteine 129/cysteine 152, and cysteine 135/cysteine 162. An ADP-ribosylarginine mark is found at arginine 125 and arginine 133. An N-linked (GlcNAc...) asparagine glycan is attached at asparagine 187. Threonine 189 is a binding site for ATP. N-linked (GlcNAc...) asparagine glycosylation is found at asparagine 202 and asparagine 213. Cysteine 216 and cysteine 226 are disulfide-bonded. N-linked (GlcNAc...) asparagine glycosylation is present at asparagine 241. Cysteine 260 and cysteine 269 are disulfide-bonded. Asparagine 284 is a glycosylation site (N-linked (GlcNAc...) asparagine). ATP-binding residues include arginine 294 and lysine 311. The helical transmembrane segment at 329–353 (DIIQLVVYIGSTLSYFGLAAVFIDF) threads the bilayer. Residue serine 342 coordinates Na(+). Phosphotyrosine is present on tyrosine 343. Residues 354–595 (LIDTYSSNCC…GQYSGFKSPY (242 aa)) lie on the Cytoplasmic side of the membrane. Positions 360 to 377 (SNCCRSHIYPWCKCCQPC) are C-cys anchor. 4 S-palmitoyl cysteine lipidation sites follow: cysteine 362, cysteine 363, cysteine 374, and cysteine 377. Serine 390 is modified (phosphoserine). The segment at 395-595 (KPTLKYVSFV…GQYSGFKSPY (201 aa)) is cytoplasmic ballast. The Zn(2+) site is built by cysteine 479, cysteine 499, and cysteine 506. 4 residues coordinate GTP: arginine 546, histidine 547, tyrosine 550, and alanine 567. Residue cysteine 572 participates in Zn(2+) binding. Positions 583, 589, and 590 each coordinate GTP.

Belongs to the P2X receptor family. As to quaternary structure, homotrimers. Interacts with LAMA3, ITGB2, ACTB, ACTN4, SVIL, MPP3, HSPA1, HSPCB, HSPA8, PIK230 and PTPRB. Interacts (via C-terminus) with EMP2. Interacts with isoform B; this interaction potentiates P2RX7 responses. Post-translationally, phosphorylation results in its inactivation. ADP-ribosylation at Arg-125 is necessary and sufficient to activate P2RX7 and gate the channel. In terms of processing, palmitoylation of several cysteines in the C-terminal cytoplasmic tail is required for efficient localization to cell surface. Palmitoylation prevents channel desensitization by physically anchoring the palmitoylated groups to the membrane. Widely expressed with highest levels in brain and immune tissues. As to expression, predominant form in many tissues.

It localises to the cell membrane. It carries out the reaction Ca(2+)(in) = Ca(2+)(out). The catalysed reaction is K(+)(in) = K(+)(out). The enzyme catalyses Na(+)(in) = Na(+)(out). Activated by high extracellular ATP levels (0.1-2.5 mM). The synthetic analog 2'(3')-O-(4-benzoylbenzoyl)ATP (BzATP) acts as a potent agonist. Does not undergo desensitization, instead, undergoes a facilitation process where currents progressively increase with repetitive or prolonged agonist application. Palmitoylation prevents channel desensitization. The permeability of the P2RX7 channel is modulated by the amount of cholesterol in the plasma membrane. Its function is as follows. ATP-gated nonselective transmembrane cation channel that requires high millimolar concentrations of ATP for activation. Upon ATP binding, it rapidly opens to allow the influx of small cations Na(+) and Ca(2+), and the K(+) efflux. Also has the ability to form a large pore in the cell membrane, allowing the passage of large cationic molecules. In microglia, may mediate NADPH transport across the plasma membrane. In immune cells, P2RX7 acts as a molecular sensor in pathological inflammatory states by detecting and responding to high local concentrations of extracellar ATP. In microglial cells, P2RX7 activation leads to the release of pro-inflammatory cytokines, such as IL-1beta and IL-18, through the activation of the NLRP3 inflammasome and caspase-1. Cooperates with KCNK6 to activate NLRP3 inflammasome. Activates death pathways leading to apoptosis and autophagy. Activates death pathways leading to pyroptosis. In terms of biological role, shows ion channel activity but no macropore function. Non-functional channel. The chain is P2X purinoceptor 7 (P2RX7) from Homo sapiens (Human).